The sequence spans 793 residues: DnaJ homolog subfamily C member 10 (793 aa).

Positions 1–32 (MGVWLNKDDYIRDLKRIILCFLIVYMAILVGT) are cleaved as a signal peptide. Residues 35–100 (DFYSLLGVSK…DLRKKYDKYG (66 aa)) form the J domain. The region spanning 130-232 (EIITLERREF…ESLVSFAMQH (103 aa)) is the Thioredoxin 1 domain. An intrachain disulfide couples C158 to C161. Trxb stretches follow at residues 235–350 (STVT…LPDF) and 348–463 (PDFE…PQNF). 3 consecutive Thioredoxin domains span residues 454-553 (HVTT…IEDL), 557-662 (SVVS…SLRI), and 671-778 (VSTD…ISEK). C480 and C483 are disulfide-bonded. An N-linked (GlcNAc...) asparagine glycan is attached at N530. Disulfide bonds link C588-C591 and C700-C703. The short motif at 790 to 793 (KDEL) is the Prevents secretion from ER element.

As to quaternary structure, interacts with EDEM1. Interacts with HSPA5 (via its J domain).

It is found in the endoplasmic reticulum lumen. Its function is as follows. Endoplasmic reticulum disulfide reductase involved both in the correct folding of proteins and degradation of misfolded proteins. Required for efficient folding of proteins in the endoplasmic reticulum by catalyzing the removal of non-native disulfide bonds formed during the folding of proteins, such as LDLR. Also involved in endoplasmic reticulum-associated degradation (ERAD) by reducing incorrect disulfide bonds in misfolded glycoproteins recognized by EDEM1. Interaction with HSPA5 is required its activity, not for the disulfide reductase activity, but to facilitate the release of DNAJC10 from its substrate. Promotes apoptotic signaling pathway in response to endoplasmic reticulum stress. The sequence is that of DnaJ homolog subfamily C member 10 (DNAJC10) from Homo sapiens (Human).